A 955-amino-acid polypeptide reads, in one-letter code: MTRKNTTTNPWAKFHGPNLGYVIEQYDLYVTGAGSVDPELQELFEIFGAPSFQDDVVTGDNTATHFSPQNTGNIEKILKVVQLVEQIRSFGHTLAHINPMEDAANGQSLLEKAMNELSDADLKAIPAKTVWQDAPEGIHTALDVIHRLKEVYTQTLAYEFSHIQDSEERAWLHQMVESNSLRQPLSNKKRTALLKRLTAVEGFEQFLHKTFVGQKRFSIEGVDMLVPVLDEIVLEGAKNGVEDVMIGMAHRGRLSVLAHVLEKPYSHMFAEFKHAKIEGAVANSGWTGDVKYHLGREQVVSNEEVSTRVTLANNPSHLEFVNPVVEGFARAAQENRKKSGLPEQDTSKSFVILVHGDAAFPGQGIVSETLNLSRLNAYQTGGTIHVIANNAVGFTTDSYDSRSTKYSSDLAKGFDIPIVHVNADDPEACLAAANLAIQYRMLFKKDFLIDLIGYRRYGHNEMDDPAVTQPQVYKKIKNHPTVRAIYADQLQAAGVLNADEIETITQFIQEQLKSDYAQVPPADTSDATIHVKVPDVVAKGIQPIDTGVELDSLRAINEGLLSWPEGFNVYPKVKKILERRKDALEENGKIEWALAESLAFASILQEGTPIRLTGQDSQRGTFAHRHIVLHDTDTNETYSPLHRLPNINASFSVHNSPLSEAAVVGYEYGYNVFAPETLVMWEAQYGDFSNTAQALFDQYVSAGRAKWGQKSGLVLLLPHGYEGQGPEHSSARPERFLQLAAENNWTVANLTSAAQYFHILRRQASVLGTEAVRPLVLMTPKSLLRHPLTLSTASQLSEGRFQPALEQENLGTKPNKVKRLVLSTGKMAIDLAAEIESGKHEYNLDEIHIVRIEQLYPFPAEKVQSIIKRFKNLEEIIWVQEEPRNMGAWHYMAPILFELAGDKVKTGYIGRPDRSSPSGGDPFAHKAEQELIVAHALDVKYNFRQDKLEIEVFSN.

The protein belongs to the alpha-ketoglutarate dehydrogenase family. As to quaternary structure, homodimer. Part of the 2-oxoglutarate dehydrogenase (OGDH) complex composed of E1 (2-oxoglutarate dehydrogenase), E2 (dihydrolipoamide succinyltransferase) and E3 (dihydrolipoamide dehydrogenase); the complex contains multiple copies of the three enzymatic components (E1, E2 and E3). The cofactor is thiamine diphosphate.

It catalyses the reaction N(6)-[(R)-lipoyl]-L-lysyl-[protein] + 2-oxoglutarate + H(+) = N(6)-[(R)-S(8)-succinyldihydrolipoyl]-L-lysyl-[protein] + CO2. Functionally, E1 component of the 2-oxoglutarate dehydrogenase (OGDH) complex which catalyzes the decarboxylation of 2-oxoglutarate, the first step in the conversion of 2-oxoglutarate to succinyl-CoA and CO(2). In Bacillus cereus (strain ATCC 10987 / NRS 248), this protein is 2-oxoglutarate dehydrogenase E1 component.